The primary structure comprises 316 residues: Polyprenyl transferase prhE (316 aa).

The next 9 helical transmembrane spans lie at 45–65 (VVGV…TFLL), 69–89 (VILS…NDLI), 114–134 (GAAL…LLLP), 135–155 (SQCA…PFGK), 163–183 (LILT…DMSP), 188–208 (IPTL…DIVY), 231–253 (ITDQ…GGIL), 257–276 (GFPF…LRFL), and 296–316 (SCLL…CVRL).

This sequence belongs to the UbiA prenyltransferase family. Requires Mg(2+) as cofactor.

It is found in the membrane. The catalysed reaction is 3,5-dimethylorsellinate + (2E,6E)-farnesyl diphosphate = (3R)-3-farnesyl-6-hydroxy-2,3,5-trimethyl-4-oxocyclohexa-1,5-diene-1-carboxylate + diphosphate + H(+). Its pathway is secondary metabolite biosynthesis; terpenoid biosynthesis. Functionally, polyprenyl transferase; part of the gene cluster that mediates the biosynthesis of paraherquonin, a meroterpenoid with a unique, highly congested hexacyclic molecular architecture. The first step of the pathway is the synthesis of 3,5-dimethylorsellinic acid (DMOA) by the polyketide synthase prhL. Synthesis of DMOA is followed by farnesylation by the prenyltransferase prhE, methylesterification by the methyl-transferase prhM, epoxidation of the prenyl chain by the flavin-dependent monooxygenase prhF, and cyclization of the farnesyl moiety by the terpene cyclase prhH, to yield the tetracyclic intermediate, protoaustinoid A. The short chain dehydrogenase prhI then oxidizes the C-3 alcohol group of the terpene cyclase product to transform protoaustinoid A into protoaustinoid B. The FAD-binding monooxygenase prhJ catalyzes the oxidation of protoaustinoid B into preaustinoid A which is further oxidized into preaustinoid A1 by FAD-binding monooxygenase phrK. Finally, prhA leads to berkeleydione via the berkeleyone B intermediate. PrhA is a multifunctional dioxygenase that first desaturates at C5-C6 to form berkeleyone B, followed by rearrangement of the A/B-ring to form the cycloheptadiene moiety in berkeleydione. Berkeleydione serves as the key intermediate for the biosynthesis of paraherquonin as well as many other meroterpenoids. The cytochrome P450 monooxygenases prhB, prhD, and prhN, as well as the isomerase prhC, are probably involved in the late stage of paraherquonin biosynthesis, after the production of berkeleydione. Especially prhC might be a multifunctional enzyme that catalyzes the D-ring expansion via intramolecular methoxy rearrangement, as well as the hydrolysis of the expanded D-ring. This is Polyprenyl transferase prhE from Penicillium brasilianum.